The following is a 23-amino-acid chain: Clavanin-B (23 aa).

The residue at position 23 (Phe-23) is a Phenylalanine amide.

The protein localises to the secreted. Functionally, has antimicrobial activity. This Styela clava (Sea squirt) protein is Clavanin-B.